Consider the following 224-residue polypeptide: Urease accessory protein UreF (224 aa).

Belongs to the UreF family. In terms of assembly, ureD, UreF and UreG form a complex that acts as a GTP-hydrolysis-dependent molecular chaperone, activating the urease apoprotein by helping to assemble the nickel containing metallocenter of UreC. The UreE protein probably delivers the nickel.

The protein resides in the cytoplasm. Required for maturation of urease via the functional incorporation of the urease nickel metallocenter. The sequence is that of Urease accessory protein UreF from Azotobacter vinelandii (strain DJ / ATCC BAA-1303).